A 305-amino-acid chain; its full sequence is Phosphoribosylaminoimidazole-succinocarboxamide synthase (305 aa).

This sequence belongs to the SAICAR synthetase family.

The enzyme catalyses 5-amino-1-(5-phospho-D-ribosyl)imidazole-4-carboxylate + L-aspartate + ATP = (2S)-2-[5-amino-1-(5-phospho-beta-D-ribosyl)imidazole-4-carboxamido]succinate + ADP + phosphate + 2 H(+). Its pathway is purine metabolism; IMP biosynthesis via de novo pathway; 5-amino-1-(5-phospho-D-ribosyl)imidazole-4-carboxamide from 5-amino-1-(5-phospho-D-ribosyl)imidazole-4-carboxylate: step 1/2. This chain is Phosphoribosylaminoimidazole-succinocarboxamide synthase, found in Polaromonas naphthalenivorans (strain CJ2).